A 371-amino-acid chain; its full sequence is NADH-ubiquinone oxidoreductase chain 1 (371 aa).

The next 10 membrane-spanning stretches (helical) occupy residues isoleucine 7–valine 27, proline 44–leucine 64, leucine 77–proline 97, leucine 109–glycine 129, leucine 153–valine 173, alanine 180–alanine 200, alanine 226–leucine 246, valine 263–valine 283, glycine 302–leucine 322, and phenylalanine 338–leucine 358.

Belongs to the complex I subunit 1 family.

It is found in the mitochondrion inner membrane. It carries out the reaction a ubiquinone + NADH + 5 H(+)(in) = a ubiquinol + NAD(+) + 4 H(+)(out). Its function is as follows. Core subunit of the mitochondrial membrane respiratory chain NADH dehydrogenase (Complex I) that is believed to belong to the minimal assembly required for catalysis. Complex I functions in the transfer of electrons from NADH to the respiratory chain. The immediate electron acceptor for the enzyme is believed to be ubiquinone. This is NADH-ubiquinone oxidoreductase chain 1 (ndh-1) from Neurospora crassa (strain ATCC 24698 / 74-OR23-1A / CBS 708.71 / DSM 1257 / FGSC 987).